The following is a 936-amino-acid chain: ATP-dependent RNA helicase dbp10 (936 aa).

Residues 1–48 (MPSRAASPALSENEFDITGALFQNDSDSDAETQKPTKRKKVPAAPNVN) are disordered. A Q motif motif is present at residues 91 to 119 (GGFQAMGLNANLLKAIARKGFSVPTPIQR). The region spanning 122 to 294 (IPVIMEDQDV…RAGLQDPTLV (173 aa)) is the Helicase ATP-binding domain. 135 to 142 (ARTGSGKT) is an ATP binding site. A DEAD box motif is present at residues 242 to 245 (DEAD). Disordered stretches follow at residues 337–363 (TEAS…EMER), 642–684 (EAKK…PDNM), 701–721 (TTDK…PTTL), and 843–936 (TPGL…SRKK). The segment covering 341–352 (LRLKEKGPEDSK) has biased composition (basic and acidic residues). Positions 360–511 (EMERAVNMKE…SDQVNFAEDV (152 aa)) constitute a Helicase C-terminal domain. Positions 663 to 675 (AEVDGDAFSDLEG) are enriched in acidic residues. Residues 701-717 (TTDKASKSNSNSKSDST) are compositionally biased toward low complexity. Residues 867–895 (EKAPKAADPLRGDYEKMKKKAEAARERAA) are compositionally biased toward basic and acidic residues. The segment covering 896 to 906 (SKVGGVTSGGK) has biased composition (low complexity). The span at 907–916 (SEIRNTDDIR) shows a compositional bias: basic and acidic residues. Residues 917–936 (KARKLKQKRREKNARPSRKK) are compositionally biased toward basic residues.

Belongs to the DEAD box helicase family. DDX54/DBP10 subfamily.

It is found in the nucleus. It localises to the nucleolus. The enzyme catalyses ATP + H2O = ADP + phosphate + H(+). In terms of biological role, ATP-binding RNA helicase involved in the biogenesis of 60S ribosomal subunits and is required for the normal formation of 25S and 5.8S rRNAs. This chain is ATP-dependent RNA helicase dbp10 (dbp10), found in Emericella nidulans (strain FGSC A4 / ATCC 38163 / CBS 112.46 / NRRL 194 / M139) (Aspergillus nidulans).